The sequence spans 243 residues: ATP synthase subunit a, chloroplastic (243 aa).

Helical transmembrane passes span 32–52 (GQVLLVSWFVLAVIFGLSFVG), 96–116 (TVFLFIFVSNWSGALLPWALI), 129–149 (DINTTVALALLTSISYFYAGI), 195–215 (LVVGVLVSLVPLIIPIPIMLL), and 216–236 (GCFTSAIQALVFATLAGAYIG).

The protein belongs to the ATPase A chain family. In terms of assembly, F-type ATPases have 2 components, CF(1) - the catalytic core - and CF(0) - the membrane proton channel. CF(1) has five subunits: alpha(3), beta(3), gamma(1), delta(1), epsilon(1). CF(0) has four main subunits: a, b, b' and c.

It is found in the plastid. Its subcellular location is the chloroplast thylakoid membrane. Key component of the proton channel; it plays a direct role in the translocation of protons across the membrane. This chain is ATP synthase subunit a, chloroplastic, found in Tetradesmus obliquus (Green alga).